Here is a 581-residue protein sequence, read N- to C-terminus: 2-isopropylmalate synthase (581 aa).

Positions 32–306 (PQWCAVDLRD…DPQLDFSDIK (275 aa)) constitute a Pyruvate carboxyltransferase domain. Mg(2+) is bound by residues aspartate 41, histidine 245, histidine 247, and asparagine 281. The tract at residues 455–581 (RSAPVEQIAL…KHQQLQNGGV (127 aa)) is regulatory domain.

The protein belongs to the alpha-IPM synthase/homocitrate synthase family. LeuA type 2 subfamily. Homodimer. Requires Mg(2+) as cofactor.

It localises to the cytoplasm. It catalyses the reaction 3-methyl-2-oxobutanoate + acetyl-CoA + H2O = (2S)-2-isopropylmalate + CoA + H(+). It participates in amino-acid biosynthesis; L-leucine biosynthesis; L-leucine from 3-methyl-2-oxobutanoate: step 1/4. Catalyzes the condensation of the acetyl group of acetyl-CoA with 3-methyl-2-oxobutanoate (2-ketoisovalerate) to form 3-carboxy-3-hydroxy-4-methylpentanoate (2-isopropylmalate). This Corynebacterium efficiens (strain DSM 44549 / YS-314 / AJ 12310 / JCM 11189 / NBRC 100395) protein is 2-isopropylmalate synthase.